Here is a 454-residue protein sequence, read N- to C-terminus: Light-independent protochlorophyllide reductase subunit N (454 aa).

Residues C22, C47, and C107 each contribute to the [4Fe-4S] cluster site.

It belongs to the BchN/ChlN family. In terms of assembly, protochlorophyllide reductase is composed of three subunits; ChlL, ChlN and ChlB. Forms a heterotetramer of two ChlB and two ChlN subunits. It depends on [4Fe-4S] cluster as a cofactor.

Its subcellular location is the plastid. It is found in the chloroplast. The enzyme catalyses chlorophyllide a + oxidized 2[4Fe-4S]-[ferredoxin] + 2 ADP + 2 phosphate = protochlorophyllide a + reduced 2[4Fe-4S]-[ferredoxin] + 2 ATP + 2 H2O. It functions in the pathway porphyrin-containing compound metabolism; chlorophyll biosynthesis (light-independent). Component of the dark-operative protochlorophyllide reductase (DPOR) that uses Mg-ATP and reduced ferredoxin to reduce ring D of protochlorophyllide (Pchlide) to form chlorophyllide a (Chlide). This reaction is light-independent. The NB-protein (ChlN-ChlB) is the catalytic component of the complex. The sequence is that of Light-independent protochlorophyllide reductase subunit N from Cycas taitungensis (Prince sago).